We begin with the raw amino-acid sequence, 194 residues long: Protein ORF31 (194 aa).

The N-terminal stretch at 1-25 (MKSVASPLCQFHGVFCLYQCRQCLA) is a signal peptide.

The protein belongs to the herpesviridae UL92 family. As to quaternary structure, interacts with ORF34.

It is found in the host nucleus. The protein localises to the host cytoplasm. Functionally, plays an important role in the expression of late genes. May play a role in viral replication. This is Protein ORF31 (ORF31) from Homo sapiens (Human).